Here is a 140-residue protein sequence, read N- to C-terminus: Nucleoside diphosphate kinase (140 aa).

ATP-binding residues include lysine 11, phenylalanine 59, arginine 87, threonine 93, arginine 104, and asparagine 114. The Pros-phosphohistidine intermediate role is filled by histidine 117.

This sequence belongs to the NDK family. Homotetramer. Requires Mg(2+) as cofactor.

It is found in the cytoplasm. It catalyses the reaction a 2'-deoxyribonucleoside 5'-diphosphate + ATP = a 2'-deoxyribonucleoside 5'-triphosphate + ADP. The catalysed reaction is a ribonucleoside 5'-diphosphate + ATP = a ribonucleoside 5'-triphosphate + ADP. Major role in the synthesis of nucleoside triphosphates other than ATP. The ATP gamma phosphate is transferred to the NDP beta phosphate via a ping-pong mechanism, using a phosphorylated active-site intermediate. The polypeptide is Nucleoside diphosphate kinase (Methylobacterium nodulans (strain LMG 21967 / CNCM I-2342 / ORS 2060)).